We begin with the raw amino-acid sequence, 957 residues long: Serine-aspartate repeat-containing protein C (957 aa).

A signal peptide spans 1 to 50 (MNNKKTVTNRKGMIPNRLNKFSIRKYSVGTASILVGTTLIFGLSGHEAKA). The tract at residues 51–166 (AEHTNGELNQ…TPKTTTIKPR (116 aa)) is disordered. The segment at 51–495 (AEHTNGELNQ…GSSTANGDQK (445 aa)) is ligand binding A region. A compositionally biased stretch (polar residues) spans 56–71 (GELNQSKNETTAPSEN). Residues 72–83 (KTTEKVDSRQLK) show a composition bias toward basic and acidic residues. The span at 84–114 (DNTQTATADQPKVTMSDSATVKETSSNMQSP) shows a compositional bias: polar residues. Residues 115-132 (QNATASQSTTQTSNVTTN) are compositionally biased toward low complexity. The segment covering 133–164 (DKSSTTYSNETDKSNLTQAKDVSATPKTTTIK) has biased composition (polar residues). 2 CNA-B domains span residues 496–606 (KYNL…YKTP) and 607–717 (KYSL…EEET). The interval 678 to 937 (TQTGTNTTED…NNSNNGTLFG (260 aa)) is disordered. Acidic residues-rich tracts occupy residues 685–695 (TEDDKDADGGE) and 712–896 (YYEE…DSDS). Positions 920-924 (LPETG) match the LPXTG sorting signal motif. A compositionally biased stretch (low complexity) spans 922 to 937 (ETGSENNNSNNGTLFG). Pentaglycyl murein peptidoglycan amidated threonine is present on Thr923. A propeptide spans 924–957 (GSENNNSNNGTLFGGLFAALGSLLLFGRRKKQNK) (removed by sortase).

It belongs to the serine-aspartate repeat-containing protein (SDr) family. In terms of assembly, homodimerizes; via N2-Domain. Interacts with host NRXN1; this interaction mediates bacterial attachment to host cells.

Its subcellular location is the secreted. It is found in the cell wall. Functionally, cell surface-associated calcium-binding protein which plays an important role in adhesion and pathogenesis. Mediates interactions with components of the extracellular matrix such as host NRXN1 to promote bacterial adhesion. This Staphylococcus aureus (strain MSSA476) protein is Serine-aspartate repeat-containing protein C (sdrC).